The chain runs to 476 residues: Glutamyl-tRNA(Gln) amidotransferase subunit A (476 aa).

Residues K70 and S145 each act as charge relay system in the active site. The Acyl-ester intermediate role is filled by S169.

It belongs to the amidase family. GatA subfamily. Heterotrimer of A, B and C subunits.

It carries out the reaction L-glutamyl-tRNA(Gln) + L-glutamine + ATP + H2O = L-glutaminyl-tRNA(Gln) + L-glutamate + ADP + phosphate + H(+). Functionally, allows the formation of correctly charged Gln-tRNA(Gln) through the transamidation of misacylated Glu-tRNA(Gln) in organisms which lack glutaminyl-tRNA synthetase. The reaction takes place in the presence of glutamine and ATP through an activated gamma-phospho-Glu-tRNA(Gln). This is Glutamyl-tRNA(Gln) amidotransferase subunit A from Methanosarcina mazei (strain ATCC BAA-159 / DSM 3647 / Goe1 / Go1 / JCM 11833 / OCM 88) (Methanosarcina frisia).